We begin with the raw amino-acid sequence, 453 residues long: 3-phosphoshikimate 1-carboxyvinyltransferase (453 aa).

The tract at residues 1 to 25 (MSHDSEPQPVTAHPAGPLTGALKPP) is disordered. 3-phosphoshikimate is bound by residues Lys-28, Ser-29, and Arg-33. Position 28 (Lys-28) interacts with phosphoenolpyruvate. Residues Gly-101 and Arg-129 each coordinate phosphoenolpyruvate. 3-phosphoshikimate is bound by residues Ser-175, Gln-177, Asp-330, and Lys-357. Phosphoenolpyruvate is bound at residue Gln-177. The Proton acceptor role is filled by Asp-330. Residues Arg-361 and Arg-405 each contribute to the phosphoenolpyruvate site.

It belongs to the EPSP synthase family. In terms of assembly, monomer.

The protein localises to the cytoplasm. The catalysed reaction is 3-phosphoshikimate + phosphoenolpyruvate = 5-O-(1-carboxyvinyl)-3-phosphoshikimate + phosphate. Its pathway is metabolic intermediate biosynthesis; chorismate biosynthesis; chorismate from D-erythrose 4-phosphate and phosphoenolpyruvate: step 6/7. Catalyzes the transfer of the enolpyruvyl moiety of phosphoenolpyruvate (PEP) to the 5-hydroxyl of shikimate-3-phosphate (S3P) to produce enolpyruvyl shikimate-3-phosphate and inorganic phosphate. This is 3-phosphoshikimate 1-carboxyvinyltransferase from Methylorubrum populi (strain ATCC BAA-705 / NCIMB 13946 / BJ001) (Methylobacterium populi).